A 1205-amino-acid polypeptide reads, in one-letter code: Nitric oxide synthase 3 (1205 aa).

2 disordered regions span residues 1-20 (MGNL…LGLG) and 26-73 (CGKQ…FPRV). Residues 33-47 (SPAPEPSWAPAPATP) show a composition bias toward pro residues. 2 residues coordinate Zn(2+): cysteine 96 and cysteine 101. The interaction with NOSIP stretch occupies residues 100–489 (RCLGSLVLPR…PDPWKGSAAK (390 aa)). A (6R)-L-erythro-5,6,7,8-tetrahydrobiopterin-binding site is contributed by serine 104. At serine 116 the chain carries Phosphoserine. Cysteine 186 provides a ligand contact to heme b. Residues glutamine 250, tryptophan 359, tyrosine 360, and glutamate 364 each contribute to the L-arginine site. Arginine 368 lines the (6R)-L-erythro-5,6,7,8-tetrahydrobiopterin pocket. Residue asparagine 369 coordinates L-arginine. Residues alanine 449, tryptophan 450, and phenylalanine 463 each coordinate (6R)-L-erythro-5,6,7,8-tetrahydrobiopterin. Tyrosine 478 contacts heme b. Threonine 498 bears the Phosphothreonine mark. Serine 529, glutamate 530, threonine 531, arginine 533, serine 575, and threonine 576 together coordinate FMN. A phosphoserine mark is found at serine 618, serine 636, and serine 641. Residues serine 657, cysteine 664, glutamate 690, and glutamine 694 each contribute to the FMN site. Arginine 781 contacts NADP(+). A disordered region spans residues 796–850 (LQYQPGDHISPHPPPRSSHRPGQGGPRVAPFSERPLMPRTPPPGGPPPSWVRDPR). Histidine 803 is an FAD binding site. Residues 833–844 (PRTPPPGGPPPS) show a composition bias toward pro residues. Residues arginine 939, tyrosine 941, serine 942, threonine 957, and alanine 959 each coordinate FAD. Residues threonine 1018, arginine 1051, serine 1080, arginine 1081, lysine 1087, tyrosine 1089, and glutamine 1091 each coordinate NADP(+). Phosphothreonine is present on threonine 1177. A phosphoserine mark is found at serine 1179 and serine 1181.

Belongs to the NOS family. Homodimer. Interacts with NOSIP and NOSTRIN. Interacts with HSP90AB1. Forms a complex with ASL, ASS1 and SLC7A1; the complex regulates cell-autonomous L-arginine synthesis and citrulline recycling while channeling extracellular L-arginine to nitric oxide synthesis pathway. Heme b serves as cofactor. The cofactor is FAD. FMN is required as a cofactor. It depends on (6R)-L-erythro-5,6,7,8-tetrahydrobiopterin as a cofactor.

Its subcellular location is the membrane. It is found in the caveola. The protein resides in the cytoplasm. It localises to the cytoskeleton. The protein localises to the golgi apparatus. Its subcellular location is the cell membrane. It carries out the reaction 2 L-arginine + 3 NADPH + 4 O2 + H(+) = 2 L-citrulline + 2 nitric oxide + 3 NADP(+) + 4 H2O. Stimulated by calcium/calmodulin. Inhibited by NOSIP and NOSTRIN. Produces nitric oxide (NO) which is implicated in vascular smooth muscle relaxation through a cGMP-mediated signal transduction pathway. NO mediates vascular endothelial growth factor (VEGF)-induced angiogenesis in coronary vessels and promotes blood clotting through the activation of platelets. This is Nitric oxide synthase 3 (NOS3) from Ovis aries (Sheep).